The chain runs to 240 residues: Ribosomal RNA large subunit methyltransferase E (240 aa).

A compositionally biased stretch (polar residues) spans M1–R13. The segment at M1–V20 is disordered. The S-adenosyl-L-methionine site is built by G85, W87, D113, D129, and D153. K193 functions as the Proton acceptor in the catalytic mechanism.

This sequence belongs to the class I-like SAM-binding methyltransferase superfamily. RNA methyltransferase RlmE family.

The protein resides in the cytoplasm. It carries out the reaction uridine(2552) in 23S rRNA + S-adenosyl-L-methionine = 2'-O-methyluridine(2552) in 23S rRNA + S-adenosyl-L-homocysteine + H(+). Its function is as follows. Specifically methylates the uridine in position 2552 of 23S rRNA at the 2'-O position of the ribose in the fully assembled 50S ribosomal subunit. This chain is Ribosomal RNA large subunit methyltransferase E, found in Roseobacter denitrificans (strain ATCC 33942 / OCh 114) (Erythrobacter sp. (strain OCh 114)).